The chain runs to 833 residues: Enhancer of filamentation 1 (833 aa).

Residues 3-65 (ARNLMARALY…PGNRVKLLIG (63 aa)) enclose the SH3 domain. Tyrosine 91, tyrosine 163, tyrosine 165, tyrosine 176, tyrosine 188, tyrosine 213, and tyrosine 222 each carry phosphotyrosine. The disordered stretch occupies residues 237–258 (EKEYDFPPPMKQDGKPDTRPEG). Over residues 248–258 (QDGKPDTRPEG) the composition is skewed to basic and acidic residues. Phosphoserine is present on serine 295. Disordered regions lie at residues 297–316 (SLHH…SDAY), 326–403 (EVPT…RLRL), and 560–623 (PANS…SERS). Residues 304–314 (QLGQSGDTQSD) show a composition bias toward polar residues. Tyrosine 316 is modified (phosphotyrosine). Residues 331–343 (TSEKANPEERDGV) are compositionally biased toward basic and acidic residues. Residues 350–833 (NPADAKGSRD…KRSLLEMATF (484 aa)) are interacts with CTTN. A Caspase cleavage related site motif is present at residues 359-362 (DVVD). The residue at position 368 (serine 368) is a Phosphoserine. Over residues 368-396 (SFSSTGSTRSNMSTSSTSSKESSLSASPS) the composition is skewed to low complexity. The segment covering 564–586 (HLKNGPNSIMNSSEYTHPGSQMQ) has biased composition (polar residues). The tract at residues 709–759 (FYYDQCETHFISLLNAIDALFSCVSSAQPPRIFVAHSKFVILSAHKLVFIG) is divergent helix-loop-helix motif. The segment at 709-833 (FYYDQCETHF…KRSLLEMATF (125 aa)) is required for interaction with PLK1. Position 779 is a phosphoserine (serine 779). Threonine 803 carries the post-translational modification Phosphothreonine.

It belongs to the CAS family. Homodimer. Forms heterodimers with BCAR1/p130cas. Forms complexes with PTK2B/RAFTK, adapter protein CRKL and LYN kinase. Part of a complex composed of NEDD9, AURKA and CTTN; within the complex NEDD9 acts as a scaffold protein and is required for complex formation. Part of a ternary complex composed of SMAD3, ITCH/AIP4 and NEDD9/HEF1; within the complex NEDD9/HEF1 interacts (via N-terminus) with ITCH/AIP4 (via WW domains); the complex mediates ubiquitination and proteasomal degradation of NEDD9/HEF1. Interacts with SMAD3; the interaction promotes NEDD9 ubiquitination and proteasomal degradation. Interacts with ID2. Interacts with CTTN (via N-terminus). Interacts with MICAL. Interacts with TXNL4/DIM1. Interacts with BCAR3 (via Ras-GEF domain). Interacts with SH2D3C isoform 1 and isoform 2. Interacts with ECT2. Interacts with PTPN11/SHP-2 (via SH2 domains); the interaction is enhanced when NEDD9/CAS-L is tyrosine phosphorylated. Interacts (via C-terminus) with PLK1 (via polo box domains). Interacts with NKX2-5. Interacts with SMAD3; the interaction is inhibited by oxidation of NEDD9. Interacts with NEDD9/HEF1; interaction is induced by CXCL12 promotion of ABL-mediated phosphorylation of NEDD9/HEF1. Interacts (via SH3 domain) with PTK2/FAK. Interacts with FYN; in the presence of PTK2. Interacts with INPPL1/SHIP2. Polyubiquitinated by ITCH/AIP4, leading to proteasomal degradation. Post-translationally, PTK2/FAK1 phosphorylates the protein at the YDYVHL motif (conserved among all cas proteins) following integrin stimulation. The SRC family kinases (FYN, SRC, LCK and CRK) are recruited to the phosphorylated sites and can phosphorylate other tyrosine residues. Ligation of either integrin beta-1 or B-cell antigen receptor on tonsillar B-cells and B-cell lines promotes tyrosine phosphorylation and both integrin and BCR-mediated tyrosine phosphorylation requires an intact actin network. Phosphorylation is required to recruit NEDD9 to T-cell receptor microclusters at the periphery of newly formed immunological synapses. In fibroblasts transformation with oncogene v-ABL results in an increase in tyrosine phosphorylation. Transiently phosphorylated following CD3 cross-linking and this phosphorylated form binds to CRKL and C3G. A mutant lacking the SH3 domain is phosphorylated upon CD3 cross-linking but not upon integrin beta-1 cross-linking. Tyrosine phosphorylation occurs upon stimulation of the G-protein coupled C1a calcitonin receptor. Calcitonin-stimulated tyrosine phosphorylation is mediated by calcium- and protein kinase C-dependent mechanisms and requires the integrity of the actin cytoskeleton. Phosphorylation at Ser-368 induces proteasomal degradation. Phosphorylated by LYN. Phosphorylation at Ser-779 by CSNK1D or CSNK1E, or phosphorylation of Thr-803 by CSNK1E enhances the interaction of NEDD9 with PLK1. In terms of tissue distribution, expressed in splenic lymphocytes (at protein level). Expressed in T-cells (at protein level). Expressed in the thymus. Expressed throughout the brain however particularly abundant in the cortex and hippocampus.

Its subcellular location is the cytoplasm. It localises to the cell cortex. The protein resides in the nucleus. It is found in the golgi apparatus. The protein localises to the cell projection. Its subcellular location is the lamellipodium. It localises to the cell junction. The protein resides in the focal adhesion. It is found in the cytoskeleton. The protein localises to the spindle pole. Its subcellular location is the cilium. It localises to the cilium basal body. The protein resides in the basolateral cell membrane. Scaffolding protein which plays a central coordinating role for tyrosine-kinase-based signaling related to cell adhesion. As a focal adhesion protein, plays a role in embryonic fibroblast migration. May play an important role in integrin beta-1 or B cell antigen receptor (BCR) mediated signaling in B- and T-cells. Integrin beta-1 stimulation leads to recruitment of various proteins including CRKl and SHPTP2 to the tyrosine phosphorylated form. Promotes adhesion and migration of lymphocytes; as a result required for the correct migration of lymphocytes to the spleen and other secondary lymphoid organs. Plays a role in the organization of T-cell F-actin cortical cytoskeleton and the centralization of T-cell receptor microclusters at the immunological synapse. Negatively regulates cilia outgrowth in polarized cysts. Modulates cilia disassembly via activation of AURKA-mediated phosphorylation of HDAC6 and subsequent deacetylation of alpha-tubulin. Positively regulates RANKL-induced osteoclastogenesis. Required for the maintenance of hippocampal dendritic spines in the dentate gyrus and CA1 regions, thereby involved in spatial learning and memory. The sequence is that of Enhancer of filamentation 1 from Mus musculus (Mouse).